The following is a 428-amino-acid chain: Enolase (428 aa).

(2R)-2-phosphoglycerate is bound at residue Q163. E205 serves as the catalytic Proton donor. Residues D242, E286, and D313 each contribute to the Mg(2+) site. Positions 338, 367, 368, and 389 each coordinate (2R)-2-phosphoglycerate. K338 serves as the catalytic Proton acceptor.

Belongs to the enolase family. It depends on Mg(2+) as a cofactor.

Its subcellular location is the cytoplasm. The protein localises to the secreted. The protein resides in the cell surface. The catalysed reaction is (2R)-2-phosphoglycerate = phosphoenolpyruvate + H2O. It participates in carbohydrate degradation; glycolysis; pyruvate from D-glyceraldehyde 3-phosphate: step 4/5. Catalyzes the reversible conversion of 2-phosphoglycerate (2-PG) into phosphoenolpyruvate (PEP). It is essential for the degradation of carbohydrates via glycolysis. The polypeptide is Enolase (Acidovorax sp. (strain JS42)).